The primary structure comprises 211 residues: Uridine kinase (211 aa).

12–19 (GGSGSGKT) lines the ATP pocket.

The protein belongs to the uridine kinase family.

It is found in the cytoplasm. It catalyses the reaction uridine + ATP = UMP + ADP + H(+). It carries out the reaction cytidine + ATP = CMP + ADP + H(+). The protein operates within pyrimidine metabolism; CTP biosynthesis via salvage pathway; CTP from cytidine: step 1/3. Its pathway is pyrimidine metabolism; UMP biosynthesis via salvage pathway; UMP from uridine: step 1/1. The sequence is that of Uridine kinase from Bacillus licheniformis (strain ATCC 14580 / DSM 13 / JCM 2505 / CCUG 7422 / NBRC 12200 / NCIMB 9375 / NCTC 10341 / NRRL NRS-1264 / Gibson 46).